A 195-amino-acid chain; its full sequence is MKVTKSDIVISAVKPEQYPSGGLPEIALAGRSNVGKSSFINSLINRKNLARTSSKPGKTQTLNFYIINDMLHFVDVPGYGFAKVSKTEREAWGRMIETYITMREELKAVVQIVDLRHKPSVDDVNMYEFLKYYGVPVIVIATKADKIPKGKWEKHAKVVKQTLDIAPSDELVLFSSETKKGKDEAWNAILAKINK.

The region spanning 22-195 is the EngB-type G domain; the sequence is GLPEIALAGR…WNAILAKINK (174 aa). GTP is bound by residues 30 to 37, 57 to 61, 75 to 78, 142 to 145, and 174 to 176; these read GRSNVGKS, GKTQT, DVPG, TKAD, and FSS. Mg(2+)-binding residues include Ser-37 and Thr-59.

Belongs to the TRAFAC class TrmE-Era-EngA-EngB-Septin-like GTPase superfamily. EngB GTPase family. The cofactor is Mg(2+).

Functionally, necessary for normal cell division and for the maintenance of normal septation. This chain is Probable GTP-binding protein EngB, found in Bacillus pumilus (strain SAFR-032).